The primary structure comprises 883 residues: Probable valine--tRNA ligase, cytoplasmic (883 aa).

Residues 1-23 (MTLKMDRKALKEEKKKQKLEKFL) are compositionally biased toward basic and acidic residues. Residues 1-49 (MTLKMDRKALKEEKKKQKLEKFLNKKTTQSKISKAPKPAKNKSSSGYDP) are disordered. Residues 30–45 (SKISKAPKPAKNKSSS) are compositionally biased toward low complexity. Positions 82–92 (PNITGSLHIGH) match the 'HIGH' region motif. A 'KMSKS' region motif is present at residues 586–590 (KMSKS). Lys-589 is a binding site for ATP.

Belongs to the class-I aminoacyl-tRNA synthetase family.

Its subcellular location is the cytoplasm. It carries out the reaction tRNA(Val) + L-valine + ATP = L-valyl-tRNA(Val) + AMP + diphosphate. The polypeptide is Probable valine--tRNA ligase, cytoplasmic (Vairimorpha ceranae (strain BRL01) (Microsporidian parasite)).